The primary structure comprises 162 residues: Nucleotide-binding protein SGR_2909 (162 aa).

The protein belongs to the YajQ family.

Its function is as follows. Nucleotide-binding protein. In Streptomyces griseus subsp. griseus (strain JCM 4626 / CBS 651.72 / NBRC 13350 / KCC S-0626 / ISP 5235), this protein is Nucleotide-binding protein SGR_2909.